Reading from the N-terminus, the 189-residue chain is uncharacterized protein (189 aa).

Belongs to the mimivirus R457/R459 family.

Its subcellular location is the virion. This is an uncharacterized protein from Acanthamoeba polyphaga mimivirus (APMV).